Consider the following 255-residue polypeptide: F-box/SPRY domain-containing protein 1 (255 aa).

Residues 3-51 form the F-box domain; sequence DPVAALCNFNVLEVIFSYLDLNDLSRCSQVCRSWHHFLNDENSDVWRWH. The B30.2/SPRY domain occupies 61-253; the sequence is MKSDLLTSVS…VSMVYLGTPL (193 aa).

This sequence belongs to the FBXO45/Fsn family. In terms of assembly, component of an E3 ubiquitin ligase complex composed of hiw and Fsn.

The protein localises to the synapse. It participates in protein modification; protein ubiquitination. In terms of biological role, required in the presynaptic motoneuron to down-regulate the levels of wnd and restrain synaptic terminal growth at the neuromuscular junction (NMJ). The sequence is that of F-box/SPRY domain-containing protein 1 from Drosophila willistoni (Fruit fly).